The following is a 250-amino-acid chain: Cobalt transport protein CbiM (250 aa).

The N-terminal stretch at 1–24 (MKYWGTALLGAFCVFFFTPNTAYA) is a signal peptide. Helical transmembrane passes span 32-52 (LPAG…FWGI), 67-87 (MLLG…IPSV), 99-119 (LGAI…VLLF), 122-142 (LLLA…MGVM), 161-181 (VAVF…TSLQ), and 203-223 (IFAI…VFVF).

The protein belongs to the CbiM family. In terms of assembly, forms an energy-coupling factor (ECF) transporter complex composed of an ATP-binding protein (A component, CbiO), a transmembrane protein (T component, CbiQ) and 2 possible substrate-capture proteins (S components, CbiM and CbiN) of unknown stoichimetry.

It localises to the cell membrane. Its pathway is cofactor biosynthesis; adenosylcobalamin biosynthesis. Functionally, part of the energy-coupling factor (ECF) transporter complex CbiMNOQ involved in cobalt import. The chain is Cobalt transport protein CbiM from Desulforamulus reducens (strain ATCC BAA-1160 / DSM 100696 / MI-1) (Desulfotomaculum reducens).